A 207-amino-acid chain; its full sequence is Holliday junction branch migration complex subunit RuvA (207 aa).

A domain I region spans residues 1 to 65 (MYDYIRGTLT…ETEHLLYGFH (65 aa)). The tract at residues 66 to 144 (SREERECFRI…DLLPLDSRVE (79 aa)) is domain II. The flexible linker stretch occupies residues 145-150 (TSQTHT). The segment at 150-207 (TTSSCLEEGIQALAALGYSKIAAERMIAEAIKDLPEGSSLTDILPIALKKNFSGVNKD) is domain III.

This sequence belongs to the RuvA family. In terms of assembly, homotetramer. Forms an RuvA(8)-RuvB(12)-Holliday junction (HJ) complex. HJ DNA is sandwiched between 2 RuvA tetramers; dsDNA enters through RuvA and exits via RuvB. An RuvB hexamer assembles on each DNA strand where it exits the tetramer. Each RuvB hexamer is contacted by two RuvA subunits (via domain III) on 2 adjacent RuvB subunits; this complex drives branch migration. In the full resolvosome a probable DNA-RuvA(4)-RuvB(12)-RuvC(2) complex forms which resolves the HJ.

It is found in the cytoplasm. The RuvA-RuvB-RuvC complex processes Holliday junction (HJ) DNA during genetic recombination and DNA repair, while the RuvA-RuvB complex plays an important role in the rescue of blocked DNA replication forks via replication fork reversal (RFR). RuvA specifically binds to HJ cruciform DNA, conferring on it an open structure. The RuvB hexamer acts as an ATP-dependent pump, pulling dsDNA into and through the RuvAB complex. HJ branch migration allows RuvC to scan DNA until it finds its consensus sequence, where it cleaves and resolves the cruciform DNA. This is Holliday junction branch migration complex subunit RuvA from Chlamydia pneumoniae (Chlamydophila pneumoniae).